We begin with the raw amino-acid sequence, 661 residues long: uncharacterized protein (661 aa).

The segment at 25 to 52 (LLPSEPPVGDMNNEDSDTNTSITQSPTN) is disordered. Residues 42–52 (TNTSITQSPTN) show a composition bias toward polar residues. In terms of domain architecture, SANT spans 246–297 (SMPDIWNEEQHSIFVQQFILHGKKFGKIAEAVPGKNSKECVLHYYLTKRTTD). Disordered stretches follow at residues 306–329 (TKTKGRRRKKLLPSQRGGKKKSKG), 478–499 (YYEPKLEQHSSSKRNSISTRKE), 548–570 (PMKMPLTPRRASTGPRPRPTFQL), and 604–633 (RIDELSVEDQEHTTHSSHTTSDINAFPNSQ). Over residues 308 to 328 (TKGRRRKKLLPSQRGGKKKSK) the composition is skewed to basic residues. Basic and acidic residues predominate over residues 478-487 (YYEPKLEQHS). Basic and acidic residues predominate over residues 604–617 (RIDELSVEDQEHTT).

The protein resides in the nucleus. This is an uncharacterized protein from Schizosaccharomyces pombe (strain 972 / ATCC 24843) (Fission yeast).